The following is a 499-amino-acid chain: Spore germination protein GerQA (499 aa).

3 helical membrane-spanning segments follow: residues 285 to 305, 376 to 396, and 409 to 429; these read LFAF…LTYH, SNVL…APIY, and FIIS…SLLL.

Belongs to the GerABKA family.

It is found in the membrane. Its function is as follows. Required for the germination response to inosine. Has no role in L-alanine germination. The sequence is that of Spore germination protein GerQA (gerQA) from Bacillus cereus.